The chain runs to 488 residues: Transmembrane protein 39A (488 aa).

Residues N31 and N39 are each glycosylated (N-linked (GlcNAc...) asparagine). 8 helical membrane-spanning segments follow: residues 72–92 (SLLF…IQYI), 110–130 (TSLN…VMLA), 154–174 (VLIS…CWTL), 182–202 (SVLN…LCCF), 287–307 (EVLF…LCFV), 319–339 (CEHL…QLLP), 420–440 (LLNL…YSLL), and 446–466 (NHTL…FKLL).

This sequence belongs to the TMEM39 family. In terms of assembly, interacts with SACM1L, SEC23A and SEC24A.

It localises to the endoplasmic reticulum membrane. In terms of biological role, regulates autophagy by controlling the spatial distribution and levels of the intracellular phosphatidylinositol 4-phosphate (PtdIns(4)P) pools. Modulates (PtdIns(4)P) levels by regulating the ER-to-Golgi trafficking of the phosphatidylinositide phosphatase SACM1L. In Bos taurus (Bovine), this protein is Transmembrane protein 39A (TMEM39A).